The primary structure comprises 615 residues: Chaperone protein DnaK (615 aa).

Position 195 is a phosphothreonine; by autocatalysis (threonine 195). A disordered region spans residues 592 to 615 (EKGAQAASGKGPDDVIDADYKPAD).

The protein belongs to the heat shock protein 70 family.

Functionally, acts as a chaperone. This Thermus thermophilus (strain ATCC BAA-163 / DSM 7039 / HB27) protein is Chaperone protein DnaK.